The chain runs to 126 residues: Small ribosomal subunit protein uS13 (126 aa).

The tract at residues 92 to 126 (RMGLPVRGQRTRTNARTRRGGRRTVAGKKKAPAKK) is disordered. Positions 100-126 (QRTRTNARTRRGGRRTVAGKKKAPAKK) are enriched in basic residues.

Belongs to the universal ribosomal protein uS13 family. As to quaternary structure, part of the 30S ribosomal subunit. Forms a loose heterodimer with protein S19. Forms two bridges to the 50S subunit in the 70S ribosome.

In terms of biological role, located at the top of the head of the 30S subunit, it contacts several helices of the 16S rRNA. In the 70S ribosome it contacts the 23S rRNA (bridge B1a) and protein L5 of the 50S subunit (bridge B1b), connecting the 2 subunits; these bridges are implicated in subunit movement. Contacts the tRNAs in the A and P-sites. This Cyanothece sp. (strain PCC 7425 / ATCC 29141) protein is Small ribosomal subunit protein uS13.